Here is a 124-residue protein sequence, read N- to C-terminus: Large ribosomal subunit protein bL20 (124 aa).

This sequence belongs to the bacterial ribosomal protein bL20 family.

In terms of biological role, binds directly to 23S ribosomal RNA and is necessary for the in vitro assembly process of the 50S ribosomal subunit. It is not involved in the protein synthesizing functions of that subunit. This is Large ribosomal subunit protein bL20 from Ehrlichia chaffeensis (strain ATCC CRL-10679 / Arkansas).